A 335-amino-acid polypeptide reads, in one-letter code: 2-acylglycerol O-acyltransferase 1 (335 aa).

2 helical membrane-spanning segments follow: residues 24–44 and 104–124; these read WVLS…MLVL and YIFG…NFCT. The N-linked (GlcNAc...) asparagine glycan is linked to N180.

It belongs to the diacylglycerol acyltransferase family. In terms of tissue distribution, expressed at high level in kidney and stomach. Expressed at lower level in brown and white adipose tissue, uterus and liver. Not detected in small intestine.

It localises to the endoplasmic reticulum membrane. The catalysed reaction is a 2-acylglycerol + an acyl-CoA = a 1,2-diacylglycerol + CoA. It carries out the reaction 2-(9Z-octadecenoyl)-glycerol + butanoyl-CoA = 1-butanoyl-2-(9Z-octadecenoyl)-glycerol + CoA. It catalyses the reaction 2-(9Z-octadecenoyl)-glycerol + octanoyl-CoA = 1-octanoyl-2-(9Z-octadecenoyl)-glycerol + CoA. The enzyme catalyses 2-(9Z-octadecenoyl)-glycerol + dodecanoyl-CoA = 1-dodecanoyl-2-(9Z-octadecenoyl)-glycerol + CoA. The catalysed reaction is 2-(9Z-octadecenoyl)-glycerol + tetradecanoyl-CoA = 1-tetradecanoyl-2-(9Z-octadecenoyl)-glycerol + CoA. It carries out the reaction 2-(9Z-octadecenoyl)-glycerol + hexadecanoyl-CoA = 1-hexadecanoyl-2-(9Z-octadecenoyl)-glycerol + CoA. It catalyses the reaction 2-(9Z-octadecenoyl)-glycerol + octadecanoyl-CoA = 1-octadecanoyl-2-(9Z-octadecenoyl)-glycerol + CoA. The enzyme catalyses eicosanoyl-CoA + 2-(9Z-octadecenoyl)-glycerol = 1-eicosanoyl-2-(9Z-octadecenoyl)-glycerol + CoA. The catalysed reaction is 2-(9Z-octadecenoyl)-glycerol + (9Z)-octadecenoyl-CoA = 1,2-di-(9Z-octadecenoyl)-glycerol + CoA. It carries out the reaction 2-(9Z-octadecenoyl)-glycerol + (9Z,12Z)-octadecadienoyl-CoA = 1-(9Z,12Z-octadecadienoyl)-2-(9Z-octadecenoyl)-glycerol + CoA. It catalyses the reaction 2-(9Z-octadecenoyl)-glycerol + (5Z,8Z,11Z,14Z)-eicosatetraenoyl-CoA = 1-(5Z,8Z,11Z,14Z-eicosatetraenoyl)-2-(9Z-octadecenoyl)-glycerol + CoA. The enzyme catalyses a 2-acylglycerol + an acyl-CoA = a 1,2-diacyl-sn-glycerol + CoA. The catalysed reaction is a 2-acylglycerol + an acyl-CoA = a 2,3-diacyl-sn-glycerol + CoA. It carries out the reaction a 1-acylglycerol + an acyl-CoA = a 1,2-diacylglycerol + CoA. It catalyses the reaction 1-dodecanoylglycerol + (9Z)-octadecenoyl-CoA = 1-dodecanoyl-2-(9Z-octadecenoyl)-glycerol + CoA. The enzyme catalyses 1-tetradecanoylglycerol + (9Z)-octadecenoyl-CoA = 1-tetradecanoyl-2-(9Z-octadecenoyl)-glycerol + CoA. The catalysed reaction is 1-hexadecanoylglycerol + (9Z)-octadecenoyl-CoA = 1-hexadecanoyl-2-(9Z-octadecenoyl)-glycerol + CoA. It carries out the reaction 1-(9Z-octadecenoyl)-glycerol + (9Z)-octadecenoyl-CoA = 1,2-di-(9Z-octadecenoyl)-glycerol + CoA. It catalyses the reaction 1-(9Z,12Z-octadecadienoyl)-glycerol + (9Z)-octadecenoyl-CoA = 1-(9Z,12Z-octadecadienoyl)-2-(9Z-octadecenoyl)-glycerol + CoA. The enzyme catalyses 1-(9Z,12Z,15Z-octadecatrienoyl)-glycerol + (9Z)-octadecenoyl-CoA = 1-(9Z,12Z,15Z-octadecatrienoyl)-2-(9Z-octadecenoyl)-glycerol + CoA. The catalysed reaction is 1-(5Z,8Z,11Z,14Z-eicosatetraenoyl)-glycerol + (9Z)-octadecenoyl-CoA = 1-(5Z,8Z,11Z,14Z-eicosatetraenoyl)-2-(9Z-octadecenoyl)-glycerol + CoA. It carries out the reaction a 1-acylglycerol + an acyl-CoA = a 1,3-diacylglycerol + CoA. It catalyses the reaction 1-dodecanoylglycerol + (9Z)-octadecenoyl-CoA = 1-dodecanoyl-3-(9Z-octadecenoyl)-glycerol + CoA. The enzyme catalyses 1-hexadecanoylglycerol + (9Z)-octadecenoyl-CoA = 1-(9Z-octadecenoyl)-3-hexadecanoylglycerol + CoA. The catalysed reaction is 1-octadecanoylglycerol + (9Z)-octadecenoyl-CoA = 1-octadecanoyl-3-(9Z-octadecenoyl)-glycerol + CoA. It carries out the reaction 1-(9Z-octadecenoyl)-sn-glycerol + (9Z)-octadecenoyl-CoA = 1,3-di-(9Z-octadecenoyl)-glycerol + CoA. It catalyses the reaction 1-(9Z,12Z-octadecadienoyl)-glycerol + (9Z)-octadecenoyl-CoA = 1-(9Z-octadecenoyl)-3-(9Z,12Z-octadecadienoyl)-glycerol + CoA. The enzyme catalyses 1-(9Z,12Z,15Z-octadecatrienoyl)-glycerol + (9Z)-octadecenoyl-CoA = 1-(9Z,12Z,15Z-octadecatrienoyl)-3-(9Z-octadecenoyl)-glycerol + CoA. The catalysed reaction is a 1-acyl-sn-glycerol + an acyl-CoA = a 1,3-diacyl-sn-glycerol + CoA. It carries out the reaction a 3-acyl-sn-glycerol + an acyl-CoA = a 1,3-diacyl-sn-glycerol + CoA. It catalyses the reaction 3-octadecanoyl-sn-glycerol + (9Z)-octadecenoyl-CoA = 1-(9Z-octadecenoyl)-3-octadecanoyl-sn-glycerol + CoA. It functions in the pathway glycerolipid metabolism; triacylglycerol biosynthesis. Involved in glycerolipid synthesis and lipid metabolism. Catalyzes the formation of diacylglycerol, the precursor of triacylglycerol, by transferring the acyl chain of a fatty acyl-CoA to a monoacylglycerol, mainly at the sn-1 or sn-3 positions. It uses both sn-2-monoacylglycerol (2-acylglycerol) and sn-1-monoacylglycerol (1-acyl-sn-glycerol) equally well as substrates, and uses sn-3-monoacylglycerol (3-acyl-sn-glycerol) with lower efficiency. Probably not involved in absorption of dietary fat in the small intestine. The chain is 2-acylglycerol O-acyltransferase 1 from Mus musculus (Mouse).